The following is a 142-amino-acid chain: Galactose-6-phosphate isomerase subunit LacA (142 aa).

It belongs to the LacAB/RpiB family. Heteromultimeric protein consisting of LacA and LacB.

The enzyme catalyses aldehydo-D-galactose 6-phosphate = keto-D-tagatose 6-phosphate. It participates in carbohydrate metabolism; D-galactose 6-phosphate degradation; D-tagatose 6-phosphate from D-galactose 6-phosphate: step 1/1. The polypeptide is Galactose-6-phosphate isomerase subunit LacA (Staphylococcus aureus (strain JH9)).